Reading from the N-terminus, the 66-residue chain is Large ribosomal subunit protein uL29 (66 aa).

The protein belongs to the universal ribosomal protein uL29 family.

The polypeptide is Large ribosomal subunit protein uL29 (Bacillus mycoides (strain KBAB4) (Bacillus weihenstephanensis)).